The following is an 872-amino-acid chain: G-type lectin S-receptor-like serine/threonine-protein kinase At5g35370 (872 aa).

A signal peptide spans 1 to 26 (MKSTFLLLLLLLSLNLLFVFVSCASS). At 27–443 (IEFVYPNFTA…NNNRGGSSFP (417 aa)) the chain is on the extracellular side. N-linked (GlcNAc...) asparagine glycosylation is found at Asn33, Asn148, and Asn239. The Bulb-type lectin domain occupies 35–156 (TASNLRFVDS…LNVSLWESFD (122 aa)). One can recognise an EGF-like; atypical domain in the interval 283–322 (PMDSCQIPFVCGKLGLCNLDNASENQSCSCPDEMRMDAGK). Intrachain disulfides connect Cys287-Cys299 and Cys293-Cys310. Residues Asn303, Asn307, Asn342, Asn379, and Asn389 are each glycosylated (N-linked (GlcNAc...) asparagine). The region spanning 338-423 (CEARNISYLE…HDLIGYVKLS (86 aa)) is the PAN domain. 2 disulfide bridges follow: Cys372–Cys394 and Cys376–Cys382. Residues 444–464 (VIALVLLPCSGFFLLIALGLL) traverse the membrane as a helical segment. At 465–872 (WWRRCAVMRY…IASQEVSGPR (408 aa)) the chain is on the cytoplasmic side. A Protein kinase domain is found at 515–814 (ENFKMQIGSG…GSIPLGNPRM (300 aa)). ATP is bound by residues 521–529 (IGSGGFGSV) and Lys543. The caM-binding stretch occupies residues 603-620 (GNGPVLEWQERFDIALGT). Asp639 functions as the Proton acceptor in the catalytic mechanism. Residue Ser656 is modified to Phosphoserine. Thr673 is modified (phosphothreonine). Ser716 and Ser859 each carry phosphoserine. The disordered stretch occupies residues 836 to 872 (QNGESETMVFHRRESSNSGGSRQSASYIASQEVSGPR). Low complexity predominate over residues 851–861 (SNSGGSRQSAS). The span at 862–872 (YIASQEVSGPR) shows a compositional bias: polar residues.

Belongs to the protein kinase superfamily. Ser/Thr protein kinase family.

It localises to the cell membrane. The enzyme catalyses L-seryl-[protein] + ATP = O-phospho-L-seryl-[protein] + ADP + H(+). It catalyses the reaction L-threonyl-[protein] + ATP = O-phospho-L-threonyl-[protein] + ADP + H(+). This Arabidopsis thaliana (Mouse-ear cress) protein is G-type lectin S-receptor-like serine/threonine-protein kinase At5g35370.